The primary structure comprises 423 residues: Histidine--tRNA ligase (423 aa).

This sequence belongs to the class-II aminoacyl-tRNA synthetase family. Homodimer.

It is found in the cytoplasm. The catalysed reaction is tRNA(His) + L-histidine + ATP = L-histidyl-tRNA(His) + AMP + diphosphate + H(+). The polypeptide is Histidine--tRNA ligase (Anoxybacillus flavithermus (strain DSM 21510 / WK1)).